Here is a 471-residue protein sequence, read N- to C-terminus: Nuclear distribution protein PAC1 (471 aa).

Positions 9-41 constitute a LisH domain; that stretch reads QAEELHKSMIAYLLSVNLSKSAAALREELADSV. A coiled-coil region spans residues 60–87; that stretch reads TSVVRLQKKIMDLESRNAALQQELDSAT. The span at 83-93 shows a compositional bias: polar residues; that stretch reads LDSATPTSLSR. The tract at residues 83 to 108 is disordered; the sequence is LDSATPTSLSRRNQDPASWLPRAPAR. WD repeat units follow at residues 113 to 154, 156 to 196, 200 to 247, 250 to 289, 292 to 352, 354 to 393, 398 to 428, and 429 to 467; these read SHRG…RTIK, HTRA…KNIR, GHDH…CVKT, GHLD…TKST, GHEH…IKTL, GHDN…KCVR, AHGH…INGQ, and GTPS…MNVR. Residues 424–449 form a disordered region; it reads GINGQGTPSMNGVSISTTSKKEDTGG. Polar residues predominate over residues 428-441; sequence QGTPSMNGVSISTT.

The protein belongs to the WD repeat LIS1/nudF family. Self-associates. Interacts with NDL1 and dynein.

The protein resides in the cytoplasm. The protein localises to the cytoskeleton. It is found in the spindle pole. Its function is as follows. Positively regulates the activity of the minus-end directed microtubule motor protein dynein. May enhance dynein-mediated microtubule sliding by targeting dynein to the microtubule plus end. Required for nuclear migration during vegetative growth as well as development. Required for retrograde early endosome (EE) transport from the hyphal tip. Required for localization of dynein to the mitotic spindle poles. Recruits additional proteins to the dynein complex at SPBs. The sequence is that of Nuclear distribution protein PAC1 from Coccidioides posadasii (strain C735) (Valley fever fungus).